Consider the following 324-residue polypeptide: Pseudouridine-5'-phosphate glycosidase (324 aa).

The active-site Proton donor is Glu-43. Lys-104 and Val-124 together coordinate substrate. Asp-156 provides a ligand contact to Mn(2+). A substrate-binding site is contributed by 158–160 (SAD). Lys-177 (nucleophile) is an active-site residue.

The protein belongs to the pseudouridine-5'-phosphate glycosidase family. As to quaternary structure, homotrimer. Requires Mn(2+) as cofactor.

It carries out the reaction D-ribose 5-phosphate + uracil = psi-UMP + H2O. Catalyzes the reversible cleavage of pseudouridine 5'-phosphate (PsiMP) to ribose 5-phosphate and uracil. Functions biologically in the cleavage direction, as part of a pseudouridine degradation pathway. The polypeptide is Pseudouridine-5'-phosphate glycosidase (Salinispora tropica (strain ATCC BAA-916 / DSM 44818 / JCM 13857 / NBRC 105044 / CNB-440)).